A 243-amino-acid polypeptide reads, in one-letter code: Pyridoxine 5'-phosphate synthase (243 aa).

3-amino-2-oxopropyl phosphate is bound at residue Asn-9. 11–12 (DH) is a binding site for 1-deoxy-D-xylulose 5-phosphate. Arg-20 is a binding site for 3-amino-2-oxopropyl phosphate. The active-site Proton acceptor is His-45. Residues Arg-47 and His-52 each coordinate 1-deoxy-D-xylulose 5-phosphate. The active-site Proton acceptor is Glu-72. A 1-deoxy-D-xylulose 5-phosphate-binding site is contributed by Thr-102. The active-site Proton donor is His-193. Residues Gly-194 and 215 to 216 (GH) each bind 3-amino-2-oxopropyl phosphate.

The protein belongs to the PNP synthase family. In terms of assembly, homooctamer; tetramer of dimers.

It is found in the cytoplasm. The enzyme catalyses 3-amino-2-oxopropyl phosphate + 1-deoxy-D-xylulose 5-phosphate = pyridoxine 5'-phosphate + phosphate + 2 H2O + H(+). Its pathway is cofactor biosynthesis; pyridoxine 5'-phosphate biosynthesis; pyridoxine 5'-phosphate from D-erythrose 4-phosphate: step 5/5. Its function is as follows. Catalyzes the complicated ring closure reaction between the two acyclic compounds 1-deoxy-D-xylulose-5-phosphate (DXP) and 3-amino-2-oxopropyl phosphate (1-amino-acetone-3-phosphate or AAP) to form pyridoxine 5'-phosphate (PNP) and inorganic phosphate. This chain is Pyridoxine 5'-phosphate synthase, found in Salmonella paratyphi A (strain ATCC 9150 / SARB42).